Reading from the N-terminus, the 234-residue chain is Large ribosomal subunit protein uL1 (234 aa).

The protein belongs to the universal ribosomal protein uL1 family. In terms of assembly, part of the 50S ribosomal subunit.

Functionally, binds directly to 23S rRNA. The L1 stalk is quite mobile in the ribosome, and is involved in E site tRNA release. Protein L1 is also a translational repressor protein, it controls the translation of the L11 operon by binding to its mRNA. The chain is Large ribosomal subunit protein uL1 from Yersinia enterocolitica serotype O:8 / biotype 1B (strain NCTC 13174 / 8081).